A 294-amino-acid chain; its full sequence is Protease HtpX (294 aa).

A run of 2 helical transmembrane segments spans residues 4–24 (ILLFILTNLSVMIIFGIILFI) and 33–53 (FGLIIMSGVFGFGGSIISLLL). H139 contributes to the Zn(2+) binding site. Residue E140 is part of the active site. H143 is a binding site for Zn(2+). Transmembrane regions (helical) follow at residues 147 to 167 (GDMITMTLIQGVVNTFVIFLS) and 197 to 217 (FFISMALEVVFGILASIITFW). A Zn(2+)-binding site is contributed by E223.

Belongs to the peptidase M48B family. The cofactor is Zn(2+).

The protein localises to the cell membrane. The polypeptide is Protease HtpX (Wigglesworthia glossinidia brevipalpis).